We begin with the raw amino-acid sequence, 227 residues long: UPF0173 metal-dependent hydrolase BCE33L4354 (227 aa).

The protein belongs to the UPF0173 family.

The protein is UPF0173 metal-dependent hydrolase BCE33L4354 of Bacillus cereus (strain ZK / E33L).